The sequence spans 638 residues: Guanylate-binding protein 7 (638 aa).

The segment at 1 to 310 (MASGPNMEAP…DAINSGDVPC (310 aa)) is GTPase domain (Globular). A GB1/RHD3-type G domain is found at 35–277 (TQPVVVVAIV…FCSYIFSNSK (243 aa)). Residues 45-52 (GLYRTGKS), 67-69 (LGT), and 97-101 (DTEGL) contribute to the GTP site. The interval 311-638 (LENAVTTLAQ…TQNSDKVRKL (328 aa)) is interaction with the CYBA-CYBB complex. The segment at 590 to 638 (SSLGAKILDGFGDVLISVVPGSGKYFGLGLKILSSQMNQTQNSDKVRKL) is C-terminal tail; required for its localization to cytoplasmic vesicle.

It belongs to the TRAFAC class dynamin-like GTPase superfamily. GB1/RHD3 GTPase family. GB1 subfamily. In terms of assembly, monomer and dimer. Interacts with CYBA, CYBA-CYBB complex and ATG4B. Interacts (via GB1/RHD3-type G domain) with NCF2 and NCF2-NCF4 complex.

Its subcellular location is the cytoplasmic vesicle membrane. The enzyme catalyses GTP + H2O = GDP + phosphate + H(+). The catalysed reaction is GDP + H2O = GMP + phosphate + H(+). With respect to regulation, inhibited by orthovanadate, berylium fluoride and aluminum flouride. Its function is as follows. Interferon (IFN)-inducible GTPase that plays important roles in innate immunity against a diverse range of bacterial, viral and protozoan pathogens. Hydrolyzes GTP to GMP in two consecutive cleavage reactions and predominantly uses GTP and not GDP or GMP as the substrate. Following infection, recruited to the pathogen-containing vacuoles or vacuole-escaped bacteria and acts as a positive regulator of inflammasome assembly by promoting the release of inflammasome ligands from bacteria. Acts by promoting lysis of pathogen-containing vacuoles, releasing pathogens into the cytosol. Following pathogen release in the cytosol, promotes recruitment of proteins that mediate bacterial cytolysis, such as Gm12250/Irgb10: this liberates ligands that are detected by inflammasomes, such as lipopolysaccharide (LPS) that activates the non-canonical CASP4/CASP11 inflammasome or double-stranded DNA (dsDNA) that activates the AIM2 inflammasome. Also promotes IFN-gamma-mediated host defense against bacterial infections by regulating oxidative responses and bacteriolytic peptide generation. May help to assemble NADPH oxidase on phagosomal membranes by acting as a bridging protein between NADPH oxidase cytosolic subunits NCF2-NCF4 and the membrane subunits CYBA-CYBB. Participates along with GBP1 in trafficking monoubiquinated protein cargo to autolysosomes for generating ubiquitin-derived antimicrobial peptides. Facilitates influenza A virus replication by inhibiting the activation of NF-kappaB and JAK-STAT signaling pathways and the expression of type I, type III interferons and pro-inflammatory cytokines. Confers protection to several pathogens, including the bacterial pathogens Listeria monocytogenes and Mycobacterium bovis BCG as well as the protozoan pathogen Toxoplasma gondii. Required for disruption of the parasitophorous vacuole formed following T.gondii infection and subsequent killing of the parasite. This Mus musculus (Mouse) protein is Guanylate-binding protein 7 (Gbp7).